The sequence spans 184 residues: Large ribosomal subunit protein uL6 (184 aa).

The protein belongs to the universal ribosomal protein uL6 family. As to quaternary structure, part of the 50S ribosomal subunit.

Its function is as follows. This protein binds to the 23S rRNA, and is important in its secondary structure. It is located near the subunit interface in the base of the L7/L12 stalk, and near the tRNA binding site of the peptidyltransferase center. The sequence is that of Large ribosomal subunit protein uL6 from Thermomicrobium roseum (strain ATCC 27502 / DSM 5159 / P-2).